The chain runs to 273 residues: 5-deoxy-glucuronate isomerase (273 aa).

The protein belongs to the isomerase IolB family.

The enzyme catalyses 5-deoxy-D-glucuronate = 5-dehydro-2-deoxy-D-gluconate. The protein operates within polyol metabolism; myo-inositol degradation into acetyl-CoA; acetyl-CoA from myo-inositol: step 4/7. Involved in the isomerization of 5-deoxy-glucuronate (5DG) to 5-dehydro-2-deoxy-D-gluconate (DKG or 2-deoxy-5-keto-D-gluconate). In Listeria innocua serovar 6a (strain ATCC BAA-680 / CLIP 11262), this protein is 5-deoxy-glucuronate isomerase.